Here is a 103-residue protein sequence, read N- to C-terminus: NADH-quinone oxidoreductase subunit K (103 aa).

A run of 3 helical transmembrane segments spans residues 6-26, 32-52, and 63-83; these read LAHYLVLGAVLFAISIVGIFL, IVLLMAIELMLLAVNLNFVAF, and VFVFFILTVAAAESAIGLAIL.

This sequence belongs to the complex I subunit 4L family. In terms of assembly, NDH-1 is composed of 14 different subunits. Subunits NuoA, H, J, K, L, M, N constitute the membrane sector of the complex.

It localises to the cell inner membrane. It carries out the reaction a quinone + NADH + 5 H(+)(in) = a quinol + NAD(+) + 4 H(+)(out). Its function is as follows. NDH-1 shuttles electrons from NADH, via FMN and iron-sulfur (Fe-S) centers, to quinones in the respiratory chain. The immediate electron acceptor for the enzyme in this species is believed to be ubiquinone. Couples the redox reaction to proton translocation (for every two electrons transferred, four hydrogen ions are translocated across the cytoplasmic membrane), and thus conserves the redox energy in a proton gradient. This Ralstonia pickettii (strain 12D) protein is NADH-quinone oxidoreductase subunit K.